The sequence spans 307 residues: NAD kinase (307 aa).

Residue Asp78 is the Proton acceptor of the active site. Residues Asp78–Gly79, His83, Asn154–Glu155, Arg165, Arg182, Asp184, and Gln255 each bind NAD(+).

This sequence belongs to the NAD kinase family. A divalent metal cation serves as cofactor.

Its subcellular location is the cytoplasm. The catalysed reaction is NAD(+) + ATP = ADP + NADP(+) + H(+). Its function is as follows. Involved in the regulation of the intracellular balance of NAD and NADP, and is a key enzyme in the biosynthesis of NADP. Catalyzes specifically the phosphorylation on 2'-hydroxyl of the adenosine moiety of NAD to yield NADP. This chain is NAD kinase, found in Halorhodospira halophila (strain DSM 244 / SL1) (Ectothiorhodospira halophila (strain DSM 244 / SL1)).